The sequence spans 142 residues: Large ribosomal subunit protein uL11 (142 aa).

It belongs to the universal ribosomal protein uL11 family. Part of the ribosomal stalk of the 50S ribosomal subunit. Interacts with L10 and the large rRNA to form the base of the stalk. L10 forms an elongated spine to which L12 dimers bind in a sequential fashion forming a multimeric L10(L12)X complex. Post-translationally, one or more lysine residues are methylated.

Forms part of the ribosomal stalk which helps the ribosome interact with GTP-bound translation factors. The sequence is that of Large ribosomal subunit protein uL11 from Mesoplasma florum (strain ATCC 33453 / NBRC 100688 / NCTC 11704 / L1) (Acholeplasma florum).